Here is a 233-residue protein sequence, read N- to C-terminus: Type II methyltransferase M.MunI (233 aa).

It belongs to the MT-A70-like family.

It catalyses the reaction a 2'-deoxyadenosine in DNA + S-adenosyl-L-methionine = an N(6)-methyl-2'-deoxyadenosine in DNA + S-adenosyl-L-homocysteine + H(+). A methylase that recognizes the double-stranded sequence 5'-CAATTG-3', methylates A-3 on both strands, and protects the DNA from cleavage by the MunI endonuclease. The chain is Type II methyltransferase M.MunI from Mycoplasma sp.